A 214-amino-acid chain; its full sequence is Adenylate kinase (214 aa).

Residue 10–15 participates in ATP binding; it reads GAGKGT. Positions 30 to 59 are NMP; the sequence is STGDMFRAAIKAGTELGKQAKALMDEGKLV. AMP is bound by residues Thr31, Arg36, 57–59, 85–88, and Gln92; these read KLV and GFPR. The LID stretch occupies residues 122–159; sequence GRRVHQASGRSYHIVYNPPKVEGKDDVTGEDLIIRADD. Residues Arg123 and 132-133 each bind ATP; that span reads SY. Residues Arg156 and Arg167 each coordinate AMP. Gln200 contacts ATP.

This sequence belongs to the adenylate kinase family. Monomer.

It localises to the cytoplasm. The enzyme catalyses AMP + ATP = 2 ADP. It participates in purine metabolism; AMP biosynthesis via salvage pathway; AMP from ADP: step 1/1. Functionally, catalyzes the reversible transfer of the terminal phosphate group between ATP and AMP. Plays an important role in cellular energy homeostasis and in adenine nucleotide metabolism. It may be linked to the biosynthesis of lipopolysaccharide surface molecules, which are important for the pathogenesis of H.influenzae. The chain is Adenylate kinase from Haemophilus influenzae (strain ATCC 51907 / DSM 11121 / KW20 / Rd).